The chain runs to 610 residues: MATRQIEAWHRLTGQRPQTLRYFMMTTDLNNRRILRQRTASEAGIRWASRYFEYPVTQLLDLRPFGPVTRNPPFEGEPPPNLLVGYYYVMKAINAYLFDQRTVSNISYNLQLALATNERAMVWQVLTDSSYSIDTGAFSRALDGNTEDLGGTVVQIQNAVMMDRVLTSLTVTPVRGLGAVVREQNNNGIAAFTVRPNFPQARVSKRDATLLRNICECKKALINYITWSPCPPLPCQLDLPFNDGWVEDFVRHFSSASPMENNSQNLVGDFAAVMTMGKQAGMRGGALTLRSGTQTGLPMRLRQREGRRAVTATMRRRRGQAVQSFIDSLPIRRRRRRGTRRQVEREDSVREPPSPGEGPSGIRAPEEEEESFSDDVGLSREDDRADFNQEVVDTIGQLIEELERELNPAAEESGFFNFSQRMYGLLLQLQRENRLTFQMILTWLSNFFVLEHLASTLFYLNEQFVRNGLARRNIGLQFAQVILRGRSDTGRELYTRVWYNREREAFHTLYDRIVTDFIAVTEMADTETMFQAPEEREQLLADMQYVENSGSVDEVIAQLQTRAQQTDSVELSFRIKFSGLVGYSQNPVIQRSFERTREAAIGRWRRQQQQ.

Residues 288 to 379 are disordered; it reads TLRSGTQTGL…ESFSDDVGLS (92 aa). Residues 328–337 carry the Nuclear localization signal motif; sequence SLPIRRRRRR. The span at 331-340 shows a compositional bias: basic residues; that stretch reads IRRRRRRGTR. Positions 341–350 are enriched in basic and acidic residues; the sequence is RQVEREDSVR. At Ser549 the chain carries O-(5'-phospho-DNA)-serine.

This sequence belongs to the adenoviridae terminal protein family. In terms of assembly, heterodimer with the polymerase; this heterodimer binds to bp 9 to 18 of the genome. Interacts with host POU2F1; POU2F1 binds to the auxiliary sequences in the inverted terminal repeats and tethers the pTP-POL heterodimer to the origin DNA thereby participating in the assembly of the pre-initiation complex (POL-TP-DBP-NFIA-POU2F1). Post-translationally, preterminal protein is used to replicate viral genome, upon genomic encapsidation it is processed first into iTP and finally into TP by adenovirus protease.

The protein resides in the host nucleus matrix. In terms of biological role, protein covalently bound to the viral DNA that acts as a primer for viral genomic replication by DNA strand displacement. Assembles on the viral origin of replication in an initiation complex with viral polymerase, DBP, host NFIA and host POU2F1/OCT1. During initiation, the polymerase covalently couples the first dCTP with Ser-580 of pTP. The terminal protein stimulates the template activity over 20 fold compared to protein-free templates. Neo-synthesized viral genomes are linked to two preterminal proteins, one for each 5' end. These new genomes are encapsidated in the nucleus, and during capsid maturation by viral protease, preterminal protein is first cleaved into intermediary (iTP), then into mature TP. May play a role in host nuclear matrix localization of genomic DNA. The sequence is that of Preterminal protein from Snake adenovirus serotype 1 (SnAdV-1).